A 312-amino-acid chain; its full sequence is Malate dehydrogenase (312 aa).

Residues 7-13 (GAAGGIG) and aspartate 34 each bind NAD(+). Arginine 81 and arginine 87 together coordinate substrate. NAD(+) contacts are provided by residues asparagine 94 and 117–119 (ITN). The substrate site is built by asparagine 119 and arginine 153. Residue histidine 177 is the Proton acceptor of the active site. Methionine 227 is a binding site for NAD(+).

It belongs to the LDH/MDH superfamily. MDH type 1 family. In terms of assembly, homodimer.

It catalyses the reaction (S)-malate + NAD(+) = oxaloacetate + NADH + H(+). Catalyzes the reversible oxidation of malate to oxaloacetate. The sequence is that of Malate dehydrogenase from Escherichia coli O7:K1 (strain IAI39 / ExPEC).